The sequence spans 421 residues: Lipid II:glycine glycyltransferase (421 aa).

It belongs to the FemABX family. As to quaternary structure, monomer.

The protein localises to the cytoplasm. The catalysed reaction is beta-D-GlcNAc-(1-&gt;4)-Mur2Ac(oyl-L-Ala-D-isoglutaminyl-L-Lys-D-Ala-D-Ala)-di-trans,octa-cis-undecaprenyl diphosphate + glycyl-tRNA(Gly) = beta-D-GlcNAc-(1-&gt;4)-Mur2Ac(oyl-L-Ala-D-isoglutaminyl-L-Lys-(N(6)-Gly)-D-Ala-D-Ala)-di-trans,octa-cis-undecaprenyl diphosphate + tRNA(Gly) + H(+). Its function is as follows. Catalyzes the incorporation of the first glycine of the pentaglycine interpeptide bridge, which is characteristic of the S.aureus peptidoglycan. This glycine is added to the epsilon-amino group of the L-lysine of the membrane-bound lipid II intermediate (GlcNAc-(beta-1,4)-N-acetylmuramic acid(-L-Ala-D-iGln-L-Lys-D-Ala-D-Ala)-pyrophosphoryl-undecaprenol), using glycyl-tRNA(Gly) as donor, in a ribosome-independent mechanism. Involved in methicillin resistance. The protein is Lipid II:glycine glycyltransferase (femX) of Staphylococcus aureus (strain USA300).